Reading from the N-terminus, the 346-residue chain is MSKEFFWGDSLTGTKKEVKWNPSLDDEDDFDNLDSDGIQHFLFLKQAVLGANAKEGERNVVEIETENFDGDNVKQPLFSLKLGLNESSPLDIGIQPPVTFILTAGSGPVFLSGQHMIEISADDEEELEEDDEEEEEEDEVEVNASPDLPVAKSKKRPLSTSDGTAKKTKMAKLDKDADKKEDDDEEEDDEEEDEVMAMMDDDEDDEDDEDFEGGEDDEEEDEEESDEDEDDEDDNEEEEEEDEDEESPEKPLKTTAKGKKGQMNGTTTAKGDNKPKAKAKTDTKLVKGKAKKKVLALDEIKGKLQESSNVPKKEEKFKNYVRSAFHISEAKKLQDLWGWFRASLQK.

Ser2 carries the N-acetylserine modification. An N-linked (GlcNAc...) asparagine glycan is attached at Asn85. Over residues Asp123 to Glu141 the composition is skewed to acidic residues. The disordered stretch occupies residues Asp123–Leu285. A Phosphoserine; by CDC2 modification is found at Ser145. Positions Ala171 to Lys180 are enriched in basic and acidic residues. A compositionally biased stretch (acidic residues) spans Glu181–Ser247. Asn264 carries N-linked (GlcNAc...) asparagine glycosylation. Over residues Gly271 to Leu285 the composition is skewed to basic and acidic residues.

The protein belongs to the nucleoplasmin family. Phosphorylation occurs in oocytes during the progression of the first meiotic M phase. No phosphorylation is observed in immature oocytes. Expressed specifically in the oocytes of the ovaries.

The protein resides in the nucleus. Its subcellular location is the nucleolus. It is found in the cytoplasm. Functionally, binds double-stranded RNA and both single-stranded and double-stranded DNA. This chain is Nucleoplasmin-like protein ANO39, found in Patiria pectinifera (Starfish).